Here is a 497-residue protein sequence, read N- to C-terminus: tRNA (adenine(58)-N(1))-methyltransferase non-catalytic subunit TRM6 (497 aa).

The tract at residues 81–103 (LEEPASETKEAGTDNRNIVDDGK) is disordered. A substrate region spans residues 95 to 105 (NRNIVDDGKSQ). Position 108 is a phosphothreonine (T108). Substrate regions lie at residues 146-155 (KYIKKKKKKY) and 176-183 (REPGKINH). Residues 275 to 354 (MLSSEPKDST…EKQRRQEEQR (80 aa)) form a disordered region. The span at 289-307 (SNGELEEKEIAEQADEDNI) shows a compositional bias: acidic residues. A compositionally biased stretch (basic and acidic residues) spans 328–354 (PENKEPKEKRSKRDYIQEKQRRQEEQR). Positions 349 and 377 each coordinate substrate. Substrate stretches follow at residues 415-423 (RERGGVINL) and 434-441 (QVLPDRSH). The disordered stretch occupies residues 474–497 (TGALDPHKAEEPAAKKQKCMESAS). The span at 478 to 487 (DPHKAEEPAA) shows a compositional bias: basic and acidic residues.

The protein belongs to the TRM6/GCD10 family. As to quaternary structure, heterotetramer; composed of two copies of TRMT6 and two copies of TRMT61A.

Its subcellular location is the nucleus. Its function is as follows. Substrate-binding subunit of tRNA (adenine-N(1)-)-methyltransferase, which catalyzes the formation of N(1)-methyladenine at position 58 (m1A58) in initiator methionyl-tRNA. Together with the TRMT61A catalytic subunit, part of a mRNA N(1)-methyltransferase complex that mediates methylation of adenosine residues at the N(1) position of a small subset of mRNAs: N(1) methylation takes place in tRNA T-loop-like structures of mRNAs and is only present at low stoichiometries. This is tRNA (adenine(58)-N(1))-methyltransferase non-catalytic subunit TRM6 (Trmt6) from Mus musculus (Mouse).